A 115-amino-acid chain; its full sequence is DNA-binding protein APE_1087b (115 aa).

The protein belongs to the PDCD5 family.

This chain is DNA-binding protein APE_1087b, found in Aeropyrum pernix (strain ATCC 700893 / DSM 11879 / JCM 9820 / NBRC 100138 / K1).